The chain runs to 284 residues: Protein pxr1 (284 aa).

The G-patch domain maps to 25–71 (TNRLGFKLLSSYGWVNGNGLGEKQHGRIHNIKVSLKDDTLGIGAKAT). Positions 149–253 (DEDRVCEDAS…KVKEGNRPAS (105 aa)) are disordered. S159 and S160 each carry phosphoserine. 2 stretches are compositionally biased toward basic residues: residues 166 to 181 (EKRK…KKKT) and 196 to 206 (TKKKKKEHKKK). Basic and acidic residues-rich tracts occupy residues 207 to 224 (DKES…DKEE) and 233 to 249 (KDKP…KEGN).

This sequence belongs to the PINX1 family.

The protein resides in the nucleus. Its subcellular location is the nucleolus. In terms of biological role, involved in rRNA-processing at A0, A1 and A2 sites and negatively regulates telomerase. This chain is Protein pxr1 (pxr1), found in Schizosaccharomyces pombe (strain 972 / ATCC 24843) (Fission yeast).